We begin with the raw amino-acid sequence, 117 residues long: Probable prefoldin subunit 1 (117 aa).

It belongs to the prefoldin subunit beta family. As to quaternary structure, heterohexamer of two PFD-alpha type and four PFD-beta type subunits.

It localises to the cytoplasm. Binds specifically to cytosolic chaperonin (c-CPN) and transfers target proteins to it. Binds to nascent polypeptide chain and promotes folding in an environment in which there are many competing pathways for nonnative proteins. Has a role in gonadogenesis. The sequence is that of Probable prefoldin subunit 1 (pfd-1) from Caenorhabditis briggsae.